We begin with the raw amino-acid sequence, 138 residues long: Beta-lactamase HcpB (138 aa).

TPR repeat units follow at residues 1 to 28 (MVGG…NEMF), 57 to 94 (GNGC…NDQD), and 97 to 130 (LILG…GSED). Disulfide bonds link cysteine 22-cysteine 30, cysteine 52-cysteine 60, cysteine 88-cysteine 96, and cysteine 124-cysteine 132.

It belongs to the hcp beta-lactamase family.

The catalysed reaction is a beta-lactam + H2O = a substituted beta-amino acid. Hydrolyzes 6-aminopenicillinic acid and 7-aminocephalosporanic acid (ACA) derivatives. In Helicobacter pylori (strain ATCC 700392 / 26695) (Campylobacter pylori), this protein is Beta-lactamase HcpB (hcpB).